The sequence spans 485 residues: Adenosylhomocysteinase 2 (485 aa).

Threonine 64, aspartate 139, and glutamate 205 together coordinate substrate. 206 to 208 is a binding site for NAD(+); it reads TTT. Lysine 235 and aspartate 239 together coordinate substrate. NAD(+)-binding positions include asparagine 240, 269–274, glutamate 292, asparagine 327, 348–350, and asparagine 397; these read GYGDVG and IGH.

This sequence belongs to the adenosylhomocysteinase family. NAD(+) serves as cofactor.

It catalyses the reaction S-adenosyl-L-homocysteine + H2O = L-homocysteine + adenosine. It functions in the pathway amino-acid biosynthesis; L-homocysteine biosynthesis; L-homocysteine from S-adenosyl-L-homocysteine: step 1/1. In terms of biological role, adenosylhomocysteine is a competitive inhibitor of S-adenosyl-L-methionine-dependent methyl transferase reactions; therefore adenosylhomocysteinase may play a key role in the control of methylations via regulation of the intracellular concentration of adenosylhomocysteine. The chain is Adenosylhomocysteinase 2 (SAHH2) from Arabidopsis thaliana (Mouse-ear cress).